The chain runs to 91 residues: Tachykinin-like peptide (91 aa).

The signal sequence occupies residues 1–19 (MKILVAFAVIMLVSAQVLA). Residues 20–51 (AEIGLNDEPEWYSDQIQEDLPVFENFLQRIAR) constitute a propeptide that is removed on maturation. Met-62 bears the Methionine amide mark. Positions 64–91 (KRNNGFGQMSRKRSAERNTIHNYERRRK) are disordered. The propeptide occupies 66-91 (NNGFGQMSRKRSAERNTIHNYERRRK). The segment covering 76 to 91 (RSAERNTIHNYERRRK) has biased composition (basic and acidic residues).

Expressed by the skin glands.

The protein localises to the secreted. In terms of biological role, tachykinins are active peptides which excite neurons, evoke behavioral responses, are potent vasodilators and secretagogues, and contract (directly or indirectly) many smooth muscles. In vitro, induces contraction of guinea pig ileum smooth muscle in a dose-dependent manner. This is Tachykinin-like peptide from Theloderma corticale (Kwangsi warty tree frog).